The following is a 157-amino-acid chain: Protein Smg homolog (157 aa).

This sequence belongs to the Smg family.

This is Protein Smg homolog from Aliivibrio fischeri (strain ATCC 700601 / ES114) (Vibrio fischeri).